A 416-amino-acid polypeptide reads, in one-letter code: UDP-N-acetylmuramoylalanine--D-glutamate ligase (416 aa).

Residue 104–110 coordinates ATP; that stretch reads GSNGKST.

This sequence belongs to the MurCDEF family.

Its subcellular location is the cytoplasm. The catalysed reaction is UDP-N-acetyl-alpha-D-muramoyl-L-alanine + D-glutamate + ATP = UDP-N-acetyl-alpha-D-muramoyl-L-alanyl-D-glutamate + ADP + phosphate + H(+). It participates in cell wall biogenesis; peptidoglycan biosynthesis. Its function is as follows. Cell wall formation. Catalyzes the addition of glutamate to the nucleotide precursor UDP-N-acetylmuramoyl-L-alanine (UMA). This Francisella tularensis subsp. holarctica (strain FTNF002-00 / FTA) protein is UDP-N-acetylmuramoylalanine--D-glutamate ligase.